Consider the following 240-residue polypeptide: E3 ubiquitin-protein ligase LubX (240 aa).

U-box domains follow at residues 30 to 103 (TTPT…QTNY) and 125 to 198 (EIPD…RKRE).

Ubiquitinated in the presence of host E1 ubiquitin-activating enzyme, E2 ubiquitin-conjugating enzyme and ubiquitin.

It localises to the secreted. Its subcellular location is the host cell. The enzyme catalyses S-ubiquitinyl-[E2 ubiquitin-conjugating enzyme]-L-cysteine + [acceptor protein]-L-lysine = [E2 ubiquitin-conjugating enzyme]-L-cysteine + N(6)-ubiquitinyl-[acceptor protein]-L-lysine.. Its function is as follows. Effector proteins function to alter host cell physiology and promote bacterial survival in host tissues. This protein is an E3 ubiquitin ligase that interferes with host's ubiquitination pathway. The sequence is that of E3 ubiquitin-protein ligase LubX (lubX) from Legionella pneumophila (strain Paris).